Reading from the N-terminus, the 257-residue chain is MLKLYDVEVGSRLLLGTARYPSPAVLAEAVRRAKTEIVTVSLRREAAGGKAGGAFFELIRELGVRVLPNTAGCHSVQEAVLTAKLARDVFRTDWIKLEVIGHHDTLQPDVFGLVEAARILSGEGFQVFPYTTDDLVVAEKLLDAGCRVLMPWCAPIGSAMGPVNPMALRAFRAHFPDVPLIVDAGVGRPSHAAAVMEYGYDAVLLNTAVAGAGDPAAMAEAFALAIDAGRIAHSAVPLEPRDMAVPSTPVIGKAVFS.

Lys-96 functions as the Schiff-base intermediate with DXP in the catalytic mechanism. Residues Gly-157, 184 to 185 (AG), and 206 to 207 (NT) each bind 1-deoxy-D-xylulose 5-phosphate.

This sequence belongs to the ThiG family. In terms of assembly, homotetramer. Forms heterodimers with either ThiH or ThiS.

It is found in the cytoplasm. The catalysed reaction is [ThiS sulfur-carrier protein]-C-terminal-Gly-aminoethanethioate + 2-iminoacetate + 1-deoxy-D-xylulose 5-phosphate = [ThiS sulfur-carrier protein]-C-terminal Gly-Gly + 2-[(2R,5Z)-2-carboxy-4-methylthiazol-5(2H)-ylidene]ethyl phosphate + 2 H2O + H(+). It participates in cofactor biosynthesis; thiamine diphosphate biosynthesis. Functionally, catalyzes the rearrangement of 1-deoxy-D-xylulose 5-phosphate (DXP) to produce the thiazole phosphate moiety of thiamine. Sulfur is provided by the thiocarboxylate moiety of the carrier protein ThiS. In vitro, sulfur can be provided by H(2)S. The chain is Thiazole synthase from Rhizobium etli (strain ATCC 51251 / DSM 11541 / JCM 21823 / NBRC 15573 / CFN 42).